A 309-amino-acid polypeptide reads, in one-letter code: Glutaminase (309 aa).

7 residues coordinate substrate: Ser-65, Asn-117, Glu-162, Asn-169, Tyr-193, Tyr-245, and Val-263.

It belongs to the glutaminase family. In terms of assembly, homotetramer.

The enzyme catalyses L-glutamine + H2O = L-glutamate + NH4(+). The chain is Glutaminase from Shouchella clausii (strain KSM-K16) (Alkalihalobacillus clausii).